The sequence spans 548 residues: Luciferin 4-monooxygenase (548 aa).

The Microbody targeting signal signature appears at 546 to 548 (AKM).

It belongs to the ATP-dependent AMP-binding enzyme family. Homodimer. It depends on Mg(2+) as a cofactor.

It localises to the peroxisome. It carries out the reaction firefly D-luciferin + ATP + O2 = firefly oxyluciferin + hnu + AMP + CO2 + diphosphate. Inhibited by ATP analogs and sodium deoxycholate. Activated by choline-containing phospholipids. Its function is as follows. Produces green light with a wavelength of 570 nm. The chain is Luciferin 4-monooxygenase from Luciola mingrelica (Southern Russian firefly).